The chain runs to 180 residues: E3 ubiquitin-protein ligase RNF5 (180 aa).

At Ala-2 the chain carries N-acetylalanine. The RING-type zinc-finger motif lies at Cys-27–Lys-68. Positions Leu-79–Gly-110 are disordered. Phosphoserine is present on Ser-84. Thr-94 carries the phosphothreonine modification. The residue at position 107 (Ser-107) is a Phosphoserine. Helical transmembrane passes span Gly-118–Phe-138 and Ser-160–Ile-180.

The protein belongs to the RNF5 family. As to quaternary structure, interacts with PXN. Interacts with Salmonella typhimurium sopA. Interacts with JKAMP. Interacts with STING1; the interaction of endogenous proteins is dependent on viral infection. Widely expressed.

The protein resides in the cell membrane. It is found in the mitochondrion membrane. It localises to the endoplasmic reticulum membrane. It catalyses the reaction S-ubiquitinyl-[E2 ubiquitin-conjugating enzyme]-L-cysteine + [acceptor protein]-L-lysine = [E2 ubiquitin-conjugating enzyme]-L-cysteine + N(6)-ubiquitinyl-[acceptor protein]-L-lysine.. The protein operates within protein modification; protein ubiquitination. Its function is as follows. Membrane-bound E3 ubiquitin-protein ligase that mediates ubiquitination of target proteins. May function together with E2 ubiquitin-conjugating enzymes UBE2D1/UBCH5A and UBE2D2/UBC4. Mediates ubiquitination of PXN/paxillin,thereby regulating cell motility and localization of PXN/paxillin. Catalyzes ubiquitination of Salmonella type III secreted protein sopA. Mediates the 'Lys-63'-linked polyubiquitination of JKAMP thereby regulating JKAMP function by decreasing its association with components of the proteasome and ERAD; the ubiquitination appears to involve E2 ubiquitin-conjugating enzyme UBE2N. Mediates the 'Lys-48'-linked polyubiquitination of STING1 at 'Lys-150' leading to its proteasomal degradation; the ubiquitination occurs in mitochondria after viral transfection and regulates antiviral responses. Catalyzes ubiquitination and subsequent degradation of ATG4B, thereby inhibiting autophagy. The polypeptide is E3 ubiquitin-protein ligase RNF5 (Homo sapiens (Human)).